The sequence spans 226 residues: Ribonuclease HII (226 aa).

One can recognise an RNase H type-2 domain in the interval 29-220; the sequence is GPVAGVDEAG…VVAAGVRLEQ (192 aa). Positions 35, 36, and 129 each coordinate a divalent metal cation.

The protein belongs to the RNase HII family. Mn(2+) is required as a cofactor. Mg(2+) serves as cofactor.

Its subcellular location is the cytoplasm. The catalysed reaction is Endonucleolytic cleavage to 5'-phosphomonoester.. Endonuclease that specifically degrades the RNA of RNA-DNA hybrids. The chain is Ribonuclease HII from Rhodococcus erythropolis (strain PR4 / NBRC 100887).